Here is a 358-residue protein sequence, read N- to C-terminus: Peptide chain release factor 1 (358 aa).

An N5-methylglutamine modification is found at glutamine 235.

It belongs to the prokaryotic/mitochondrial release factor family. Methylated by PrmC. Methylation increases the termination efficiency of RF1.

It localises to the cytoplasm. Its function is as follows. Peptide chain release factor 1 directs the termination of translation in response to the peptide chain termination codons UAG and UAA. This chain is Peptide chain release factor 1, found in Neisseria meningitidis serogroup B (strain ATCC BAA-335 / MC58).